The primary structure comprises 380 residues: Coiled-coil domain-containing protein 74B (380 aa).

3 disordered regions span residues 1 to 51 (MSGA…KRNL), 89 to 108 (LIMNQTSQKKDGPSGNHLSR), and 128 to 202 (GGPS…DVPQ). Polar residues predominate over residues 34 to 44 (LRPQSPQLRQS). Residues 47–93 (QKRNLDLEKSLQFLQQQHSEMLAKLHEEIEHLKRENKDLRYKLIMNQ) adopt a coiled-coil conformation. Positions 141–151 (RTHRPGGKHGR) are enriched in basic residues. Polar residues predominate over residues 165–182 (DSLSTSSFQSVKSISNSG).

The sequence is that of Coiled-coil domain-containing protein 74B (CCDC74B) from Homo sapiens (Human).